The following is a 546-amino-acid chain: Serine/threonine-protein kinase Chk2 (546 aa).

The interval 1 to 70 is disordered; that stretch reads MKSHHQSHSS…SSHSSSGTLS (70 aa). Over residues 8–70 the composition is skewed to low complexity; sequence HSSTSSKAHD…SSHSSSGTLS (63 aa). Position 68 is a phosphothreonine; by MAP3K20 (T68). Phosphoserine; by PLK3 is present on S71. At T77 the chain carries Phosphothreonine; by ATM and MAP3K20. Residue S82 is modified to Phosphoserine; by PLK3. The 63-residue stretch at 117–179 folds into the FHA domain; the sequence is YWFGRDKSCE…NGTFVNTELI (63 aa). The 267-residue stretch at 224–490 folds into the Protein kinase domain; sequence YIMSKTLGSG…TEEALNHPWL (267 aa). ATP-binding positions include 231–238, K253, and 306–312; these read GSGACGEV and ELMEGGE. D351 (proton acceptor) is an active-site residue. ATP is bound by residues 355–356 and D372; that span reads EN. Positions 372 to 398 are T-loop/activation segment; sequence DFGQSKILGETSLMRTLCGTPTYLAPE. At S383 the chain carries Phosphoserine; by autocatalysis. Residues T387 and T391 each carry the phosphothreonine; by autocatalysis modification. S460 carries the post-translational modification Phosphoserine.

Belongs to the protein kinase superfamily. CAMK Ser/Thr protein kinase family. CHK2 subfamily. As to quaternary structure, homodimer. Homodimerization is part of the activation process but the dimer may dissociate following activation. Interacts with PML. Interacts with TP53. Interacts with RB1; phosphorylates RB1. Interacts with BRCA1. Interacts (phosphorylated at Thr-68) with MDC1; requires ATM-mediated phosphorylation of CHEK2. Interacts with TP53BP1; modulates CHEK2 phosphorylation at Thr-68 in response to ionizing radiation. Interacts with CDC25A; phosphorylates CDC25A and mediates its degradation in response to ionizing radiation. Interacts with CUL1; mediates CHEK2 ubiquitination and regulation. Interacts with CDKN2AIP. Interacts (via protein kinase domain) with CCAR2 (via N-terminus). Interacts with SIRT1. Mg(2+) serves as cofactor. In terms of processing, phosphorylated. Phosphorylated at Ser-82 by PLK3 in response to DNA damage, promoting phosphorylation at Thr-77 by ATM and the G2/M transition checkpoint. Phosphorylation at Thr-77 induces homodimerization. Autophosphorylates at Thr-387 and Thr-391 in the T-loop/activation segment upon dimerization to become fully active. DNA damage-induced autophosphorylation at Ser-383 induces CUL1-mediated ubiquitination and regulates the pro-apoptotic function. Phosphorylation at Ser-460 also regulates ubiquitination. Phosphorylated by PLK4. Ubiquitinated. CUL1-mediated ubiquitination regulates the pro-apoptotic function. Ubiquitination may also regulate protein stability. Ubiquitinated by RNF8 via 'Lys-48'-linked ubiquitination. In terms of tissue distribution, ubiquitously expressed with higher levels in the thymus, spleen and colon (at protein level).

It is found in the nucleus. The protein localises to the PML body. The protein resides in the nucleoplasm. The enzyme catalyses L-seryl-[protein] + ATP = O-phospho-L-seryl-[protein] + ADP + H(+). It catalyses the reaction L-threonyl-[protein] + ATP = O-phospho-L-threonyl-[protein] + ADP + H(+). With respect to regulation, activated through phosphorylation at Thr-68 by ATM in response to DNA double-strand breaks. Activation is modulated by several mediators including MDC1 and TP53BP1. Induces homodimerization with exchange of the T-loop/activation segment between protomers and transphosphorylation of the protomers. The autophosphorylated kinase dimer is fully active. Negatively regulated by PPM1D through dephosphorylation of Thr-68. Functionally, serine/threonine-protein kinase which is required for checkpoint-mediated cell cycle arrest, activation of DNA repair and apoptosis in response to the presence of DNA double-strand breaks. May also negatively regulate cell cycle progression during unperturbed cell cycles. Following activation, phosphorylates numerous effectors preferentially at the consensus sequence [L-X-R-X-X-S/T]. Regulates cell cycle checkpoint arrest through phosphorylation of CDC25A, CDC25B and CDC25C, inhibiting their activity. Inhibition of CDC25 phosphatase activity leads to increased inhibitory tyrosine phosphorylation of CDK-cyclin complexes and blocks cell cycle progression. May also phosphorylate NEK6 which is involved in G2/M cell cycle arrest. Regulates DNA repair through phosphorylation of BRCA2, enhancing the association of RAD51 with chromatin which promotes DNA repair by homologous recombination. Also stimulates the transcription of genes involved in DNA repair (including BRCA2) through the phosphorylation and activation of the transcription factor FOXM1. Regulates apoptosis through the phosphorylation of p53/TP53, MDM4 and PML. Phosphorylation of p53/TP53 at 'Ser-20' by CHEK2 may alleviate inhibition by MDM2, leading to accumulation of active p53/TP53. Phosphorylation of MDM4 may also reduce degradation of p53/TP53. Also controls the transcription of pro-apoptotic genes through phosphorylation of the transcription factor E2F1. Tumor suppressor, it may also have a DNA damage-independent function in mitotic spindle assembly by phosphorylating BRCA1. Its absence may be a cause of the chromosomal instability observed in some cancer cells. Promotes the CCAR2-SIRT1 association and is required for CCAR2-mediated SIRT1 inhibition. Under oxidative stress, promotes ATG7 ubiquitination by phosphorylating the E3 ubiquitin ligase TRIM32 at 'Ser-56' leading to positive regulation of the autophagosme assembly. The chain is Serine/threonine-protein kinase Chk2 from Mus musculus (Mouse).